The following is a 241-amino-acid chain: Carboxy-S-adenosyl-L-methionine synthase (241 aa).

S-adenosyl-L-methionine-binding positions include Tyr38, 63 to 65 (GCS), 88 to 89 (DN), 116 to 117 (DI), Asn131, and Arg198.

The protein belongs to the class I-like SAM-binding methyltransferase superfamily. Cx-SAM synthase family. Homodimer.

It catalyses the reaction prephenate + S-adenosyl-L-methionine = carboxy-S-adenosyl-L-methionine + 3-phenylpyruvate + H2O. Catalyzes the conversion of S-adenosyl-L-methionine (SAM) to carboxy-S-adenosyl-L-methionine (Cx-SAM). The sequence is that of Carboxy-S-adenosyl-L-methionine synthase from Mannheimia succiniciproducens (strain KCTC 0769BP / MBEL55E).